The following is a 141-amino-acid chain: ATP synthase epsilon chain (141 aa).

The protein belongs to the ATPase epsilon chain family. In terms of assembly, F-type ATPases have 2 components, CF(1) - the catalytic core - and CF(0) - the membrane proton channel. CF(1) has five subunits: alpha(3), beta(3), gamma(1), delta(1), epsilon(1). CF(0) has three main subunits: a, b and c.

It localises to the cell inner membrane. In terms of biological role, produces ATP from ADP in the presence of a proton gradient across the membrane. The protein is ATP synthase epsilon chain of Pseudomonas savastanoi pv. phaseolicola (strain 1448A / Race 6) (Pseudomonas syringae pv. phaseolicola (strain 1448A / Race 6)).